Reading from the N-terminus, the 195-residue chain is E3 ubiquitin-protein ligase ZNRF1 (195 aa).

Residues 1–10 are compositionally biased toward polar residues; it reads MGGKQSSASR. 2 disordered regions span residues 1–36 and 61–84; these read MGGKQSSASRSRAPFPGVSSDDSAVPPSSNFGHFRA and PFGLYRAGPDTERGGSSGSEDSRG. Gly-2 is lipidated: N-myristoyl glycine. Residues 18 to 29 are compositionally biased toward low complexity; sequence VSSDDSAVPPSS. An RING-type; atypical zinc finger spans residues 152–193; it reads CVICLEELSQGDTIARLPCLCIYHKSCIDSWFEVNRCCPEHP.

The protein resides in the endosome. Its subcellular location is the lysosome. It is found in the membrane. It catalyses the reaction S-ubiquitinyl-[E2 ubiquitin-conjugating enzyme]-L-cysteine + [acceptor protein]-L-lysine = [E2 ubiquitin-conjugating enzyme]-L-cysteine + N(6)-ubiquitinyl-[acceptor protein]-L-lysine.. The protein operates within protein modification; protein ubiquitination. E3 ubiquitin-protein ligase that plays a role in neuron cells differentiation. Plays a role in the establishment and maintenance of neuronal transmission and plasticity. The sequence is that of E3 ubiquitin-protein ligase ZNRF1 (znrf1) from Xenopus tropicalis (Western clawed frog).